The sequence spans 232 residues: MNYITFPTAQHAVEKIAQEFVIYSQLNHPAHISLSGGSTPKLLFKTLAQSPYAEQINWRNLHFWWGDDRMVSPSDPESNYGEVQKLLFDHIQIPAENIHRIRGENEPHFELKRFQAELSAVISDGVFDWIILGMGADGHTSSLFPHQTNFDDENLAVIAKHPESGQIRISKTAKLIEQAKRITYLVTGEGKAEILKEIQSTPAENLPYPAAKIYAKNGVTEWYLDKDAAKLL.

The protein belongs to the glucosamine/galactosamine-6-phosphate isomerase family. 6-phosphogluconolactonase subfamily.

The catalysed reaction is 6-phospho-D-glucono-1,5-lactone + H2O = 6-phospho-D-gluconate + H(+). It participates in carbohydrate degradation; pentose phosphate pathway; D-ribulose 5-phosphate from D-glucose 6-phosphate (oxidative stage): step 2/3. In terms of biological role, hydrolysis of 6-phosphogluconolactone to 6-phosphogluconate. In Aggregatibacter actinomycetemcomitans (Actinobacillus actinomycetemcomitans), this protein is 6-phosphogluconolactonase (pgl).